Consider the following 252-residue polypeptide: ATP synthase subunit a (252 aa).

6 helical membrane-spanning segments follow: residues 29-49 (FTNV…FLFI), 87-107 (FFPL…IGLF), 117-137 (IMIT…YGFY), 146-166 (LFVP…IEII), 196-216 (FIVS…LPLI), and 219-239 (VAIT…FTVL).

This sequence belongs to the ATPase A chain family. F-type ATPases have 2 components, CF(1) - the catalytic core - and CF(0) - the membrane proton channel. CF(1) has five subunits: alpha(3), beta(3), gamma(1), delta(1), epsilon(1). CF(0) has three main subunits: a(1), b(2) and c(9-12). The alpha and beta chains form an alternating ring which encloses part of the gamma chain. CF(1) is attached to CF(0) by a central stalk formed by the gamma and epsilon chains, while a peripheral stalk is formed by the delta and b chains.

It localises to the cell inner membrane. Functionally, key component of the proton channel; it plays a direct role in the translocation of protons across the membrane. The chain is ATP synthase subunit a from Bartonella tribocorum (strain CIP 105476 / IBS 506).